We begin with the raw amino-acid sequence, 175 residues long: Putative FAS1 domain-containing protein 081L (175 aa).

Residues 28–172 (GPIVPSVWTI…GLVHIVDQFP (145 aa)) enclose the FAS1 domain.

This chain is Putative FAS1 domain-containing protein 081L, found in Invertebrate iridescent virus 3 (IIV-3).